The primary structure comprises 436 residues: 23S rRNA (uracil(1939)-C(5))-methyltransferase RlmD (436 aa).

Positions lysine 10–lysine 68 constitute a TRAM domain. Positions 81, 87, 90, and 168 each coordinate [4Fe-4S] cluster. The S-adenosyl-L-methionine site is built by glutamine 270, phenylalanine 299, asparagine 304, glutamate 320, aspartate 347, and aspartate 368. The active-site Nucleophile is cysteine 394.

It belongs to the class I-like SAM-binding methyltransferase superfamily. RNA M5U methyltransferase family. RlmD subfamily.

It catalyses the reaction uridine(1939) in 23S rRNA + S-adenosyl-L-methionine = 5-methyluridine(1939) in 23S rRNA + S-adenosyl-L-homocysteine + H(+). In terms of biological role, catalyzes the formation of 5-methyl-uridine at position 1939 (m5U1939) in 23S rRNA. The sequence is that of 23S rRNA (uracil(1939)-C(5))-methyltransferase RlmD from Haemophilus parainfluenzae (strain T3T1).